The primary structure comprises 255 residues: Isoprenyl transferase (255 aa).

Aspartate 35 is an active-site residue. Mg(2+) is bound at residue aspartate 35. Substrate is bound by residues 36–39 (GNGR), tryptophan 40, arginine 48, histidine 52, and 80–82 (STE). Residue asparagine 83 is the Proton acceptor of the active site. Residues tryptophan 84, arginine 86, arginine 203, and 209–211 (RIS) contribute to the substrate site. Glutamate 222 provides a ligand contact to Mg(2+).

The protein belongs to the UPP synthase family. Homodimer. Requires Mg(2+) as cofactor.

Functionally, catalyzes the condensation of isopentenyl diphosphate (IPP) with allylic pyrophosphates generating different type of terpenoids. The sequence is that of Isoprenyl transferase from Clostridium tetani (strain Massachusetts / E88).